A 236-amino-acid chain; its full sequence is 2-C-methyl-D-erythritol 4-phosphate cytidylyltransferase (236 aa).

This sequence belongs to the IspD/TarI cytidylyltransferase family. IspD subfamily. Homodimer.

It carries out the reaction 2-C-methyl-D-erythritol 4-phosphate + CTP + H(+) = 4-CDP-2-C-methyl-D-erythritol + diphosphate. The protein operates within isoprenoid biosynthesis; isopentenyl diphosphate biosynthesis via DXP pathway; isopentenyl diphosphate from 1-deoxy-D-xylulose 5-phosphate: step 2/6. Functionally, catalyzes the formation of 4-diphosphocytidyl-2-C-methyl-D-erythritol from CTP and 2-C-methyl-D-erythritol 4-phosphate (MEP). In Salmonella agona (strain SL483), this protein is 2-C-methyl-D-erythritol 4-phosphate cytidylyltransferase.